The following is a 227-amino-acid chain: 2,3-bisphosphoglycerate-dependent phosphoglycerate mutase (227 aa).

Substrate is bound by residues 7–14 (RHGQSEWN), 20–21 (TG), Arg59, 86–89 (ERHY), Lys97, 113–114 (RR), and 182–183 (GN). His8 serves as the catalytic Tele-phosphohistidine intermediate. The active-site Proton donor/acceptor is the Glu86.

The protein belongs to the phosphoglycerate mutase family. BPG-dependent PGAM subfamily. Homodimer.

It catalyses the reaction (2R)-2-phosphoglycerate = (2R)-3-phosphoglycerate. It functions in the pathway carbohydrate degradation; glycolysis; pyruvate from D-glyceraldehyde 3-phosphate: step 3/5. Its function is as follows. Catalyzes the interconversion of 2-phosphoglycerate and 3-phosphoglycerate. The protein is 2,3-bisphosphoglycerate-dependent phosphoglycerate mutase of Neisseria meningitidis serogroup B (strain ATCC BAA-335 / MC58).